A 625-amino-acid chain; its full sequence is MVKLDYRALGLKVGLEIHIQLDTGRKLFCHCKPELKNTEPDFRIIRRLRPAMSELSSIDPAALWEFRKMKTMMYEGFNDVTCLVELDEEPPHEPDEESLLLALAVSKVFNAKVFDEVYVMRKVVIDGSNVSGFQRTMVIAHDGLAEFLNYKVPIWTISLEEDAARRIEDKGDVTVYRLDRLGIPLIEVSTGPMEYPPNSIMEVAWLIGRTIMNTRRTKRGLGAIRQDLNISIAKGAKTEVKGVPELSLIPKVIEYEALRQVNLLKIKDELNNRGLSRESYTPDLIDVTSVFSSTKSSIVKRTINEGGIVAALKAPGLRGILGFELQPGRRFGSELADRVRAWTRLGGLMHSDELPGYGISKEEVAAVASRLGVDSFILLMGPQGVELQEAAKVIVDRIKEAFDGVPEETRAAKEDGTTYFMRPRPGAARMYPETDLRPIRITFELLAKADKYVPEPIDKQIERYTSMGMSRELARQLASSEYSIEAEELIKKYEDKVNPTLVASIFVNMIGGMGKNIEQLNIIQVVDKLLELYVNGRVTREAIQDTIQKYVEEGGRRGVEDIINEGGLWRMQYSEVASIVKSLINNGVKDKGKLMSIIMRDYRGRVDSRDVEKAINEFLSSEQKS.

The protein belongs to the GatB/GatE family. GatE subfamily. Heterodimer of GatD and GatE.

It catalyses the reaction L-glutamyl-tRNA(Gln) + L-glutamine + ATP + H2O = L-glutaminyl-tRNA(Gln) + L-glutamate + ADP + phosphate + H(+). In terms of biological role, allows the formation of correctly charged Gln-tRNA(Gln) through the transamidation of misacylated Glu-tRNA(Gln) in organisms which lack glutaminyl-tRNA synthetase. The reaction takes place in the presence of glutamine and ATP through an activated gamma-phospho-Glu-tRNA(Gln). The GatDE system is specific for glutamate and does not act on aspartate. In Caldivirga maquilingensis (strain ATCC 700844 / DSM 13496 / JCM 10307 / IC-167), this protein is Glutamyl-tRNA(Gln) amidotransferase subunit E.